The chain runs to 450 residues: Beclin-1 (450 aa).

Position 1 is an N-acetylmethionine (methionine 1). Residues serine 15 and serine 30 each carry the phosphoserine modification. Residues 48–72 form a disordered region; it reads TTAQAKPGETQEEETNSGEEPFIET. A phosphoserine; by AMPK mark is found at serine 90, serine 93, and serine 96. A BH3 motif is present at residues 108–127; the sequence is TMENLSRRLKVTGDLFDIMS. An interaction with BCL2 and BCL2L1 region spans residues 112–159; the sequence is LSRRLKVTGDLFDIMSGQTDVDHPLCEECTDTLLDQLDTQLNVTENEC. Threonine 119 is modified (phosphothreonine; by DAPK1). Positions 142-269 form a coiled coil; sequence DTLLDQLDTQ…QLDKLKKTNV (128 aa). Residues 245–450 are evolutionary conserved domain (ECD); sequence DELKSVENQM…AWVSSQFYNK (206 aa). Glycyl lysine isopeptide (Lys-Gly) (interchain with G-Cter in ubiquitin) cross-links involve residues lysine 402 and lysine 437. Residues 425 to 450 are required for membrane-association; the sequence is WTKALKFMLTNLKWGLAWVSSQFYNK.

It belongs to the beclin family. A homodimeric form is proposed to exist; this metastable form readily transits to ATG14- or UVRAG-containing complexes with BECN1:UVRAG being more stable than BECN1:ATG14. Component of the PI3K (PI3KC3/PI3K-III/class III phosphatidylinositol 3-kinase) complex the core of which is composed of the catalytic subunit PIK3C3, the regulatory subunit PIK3R4 and BECN1 associating with additional regulatory/auxiliary subunits to form alternative complex forms. Alternative complex forms containing a fourth regulatory subunit in a mutually exclusive manner are PI3K complex I (PI3KC3-C1) containing ATG14, and PI3K complex II (PI3KC3-C2) containing UVRAG. PI3KC3-C1 displays a V-shaped architecture with PIK3R4 serving as a bridge between PIK3C3 and the ATG14:BECN1 subcomplex. Both, PI3KC3-C1 and PI3KC3-C2, can associate with further regulatory subunits, such as RUBCN, SH3GLB1/Bif-1 and AMBRA1. PI3KC3-C1 probably associates with PIK3CB. Forms a complex with PPP2CA and AMBRA1; AMBRA1 and BECN1 components of the complex regulate MYC stability via different pathways. Component of the complex, at least composed of LRPPRC, BECN1 and BCL2; the interactions prevent BECN1 from forming an autophagy-inducing complex with PIK3C3. Interacts with AMBRA1, GOPC, GRID2. Interacts with BCL2 and BCL2L1 isoform Bcl-X(L); the interaction inhibits BECN1 function in promoting autophagy by interfering with the formation of the PI3K complex. Interacts with cytosolic HMGB1; inhibits the interaction of BECN1 and BCL2 leading to promotion of autophagy. Interacts with USP10, USP13, VMP1, DAPK1, RAB39A. Interacts with the poly-Gln domain of ATXN3; the interaction causes deubiquitination at Lys-402 and stabilizes BECN1. Interacts with SLAMF1. Interacts with TRIM5; the interaction causes activation of BECN1 by causing its dissociation from its inhibitors BCL2 and TAB2. Interacts with active ULK1 (phosphorylated on 'Ser-317') and MEFV simultaneously. Interacts with WDR81 and WDR91; negatively regulates the PI3 kinase/PI3K activity associated with endosomal membranes. Interacts with LAPTM4B; competes with EGFR for LAPTM4B binding; regulates EGFR activity. Interacts with TRIM50. Interacts with TRIM16. Interacts with ATG14; this interaction is increased in the absence of TMEM39A. Interacts with WASHC1; preventing interaction with AMBRA1 and the DCX(AMBRA1) complex and subsequent ubiquitination. Interacts with TRIM17. Interacts with BCL2L10/BCL-B (via BH1 domain). Interacts with SH3BGRL. Interacts with IRGM; enhancing BECN1-interacting partners and influencing the composition of the BECN1 complex. Interacts with ARMC3. Interacts with LRPPRC. Post-translationally, phosphorylation at Thr-119 by DAPK1 reduces its interaction with BCL2 and BCL2L1 and promotes induction of autophagy. In response to autophagic stimuli, phosphorylated at serine residues by AMPK in an ATG14-dependent manner, and this phosphorylation is critical for maximally efficient autophagy. Polyubiquitinated by NEDD4, both with 'Lys-11'- and 'Lys-63'-linkages. 'Lys-11'-linked polyubiquitination leads to degradation and is enhanced when the stabilizing interaction partner VPS34 is depleted. Deubiquitinated by USP10 and USP13, leading to stabilize the PIK3C3/VPS34-containing complexes. Polyubiquitinated at Lys-402 with 'Lys-48'-linkages. 'Lys-48'-linked polyubiquitination of Lys-402 leads to degradation. Deubiquitinated by ATXN3, leading to stabilization. Ubiquitinated at Lys-437 via 'Lys-63'-linkage by the DCX(AMBRA1) complex, thereby increasing the association between BECN1 and PIK3C3 to promote PIK3C3 activity. 'Lys-48'-linked ubiquitination by RNF216 leads to proteasomal degradation and autophagy inhibition. In terms of processing, proteolytically processed by caspases including CASP8 and CASP3; the C-terminal fragments lack autophagy-inducing capacity and are proposed to induce apoptosis. Thus the cleavage is proposed to be an determinant to switch from autophagy to apoptosis pathways affecting cellular homeostasis including viral infections and survival of tumor cells.

It localises to the cytoplasm. It is found in the golgi apparatus. Its subcellular location is the trans-Golgi network membrane. The protein localises to the endosome membrane. The protein resides in the endoplasmic reticulum membrane. It localises to the mitochondrion membrane. It is found in the cytoplasmic vesicle. Its subcellular location is the autophagosome. The protein localises to the mitochondrion. The protein resides in the nucleus. In terms of biological role, plays a central role in autophagy. Acts as a core subunit of the PI3K complex that mediates formation of phosphatidylinositol 3-phosphate; different complex forms are believed to play a role in multiple membrane trafficking pathways: PI3KC3-C1 is involved in initiation of autophagosomes and PI3KC3-C2 in maturation of autophagosomes and endocytosis. Involved in regulation of degradative endocytic trafficking and required for the abscission step in cytokinesis, probably in the context of PI3KC3-C2. Essential for the formation of PI3KC3-C2 but not PI3KC3-C1 PI3K complex forms. Involved in endocytosis. May play a role in antiviral host defense. Beclin-1-C 35 kDa localized to mitochondria can promote apoptosis; it induces the mitochondrial translocation of BAX and the release of proapoptotic factors. In Pongo abelii (Sumatran orangutan), this protein is Beclin-1 (BECN1).